Consider the following 463-residue polypeptide: Peptidase inhibitor 16 (463 aa).

The first 27 residues, 1-27 (MHGSCSFLMLLLPLLLLLVATTGPVGA), serve as a signal peptide directing secretion. In terms of domain architecture, SCP spans 37–165 (VELHNLYRAQ…TNIELLVCNY (129 aa)). The N-linked (GlcNAc...) asparagine glycan is linked to Asn-114. Disordered regions lie at residues 262–281 (TQAP…TEAP), 303–341 (EPVT…DPKM), and 383–408 (LQAT…SATA). A compositionally biased stretch (basic and acidic residues) spans 318-327 (SADKVTDKTK). Residues 386–395 (TLDHTGHTSS) form an O-glycosylated at one site region. The segment covering 392-408 (HTSSKSLPNFPNTSATA) has biased composition (polar residues). Residues Asn-403 and Asn-409 are each glycosylated (N-linked (GlcNAc...) asparagine).

It belongs to the CRISP family. As to quaternary structure, interacts with PSP94/MSMB. In terms of processing, N- and O-glycosylated. O-glycosylated with core 1 or possibly core 8 glycans. Expressed in prostate, testis, ovary and intestine. Concentrates in prostate cancer patient's sera.

The protein localises to the secreted. In terms of biological role, may inhibit cardiomyocyte growth. This chain is Peptidase inhibitor 16 (PI16), found in Homo sapiens (Human).